Consider the following 117-residue polypeptide: Transcription elongation factor SPT4 (117 aa).

The interval 1–40 (MALETVPKDLRHLRACLLCSLVKTIDQFEYDGCDNCDAYL) is interaction with SUPT5H. The segment at 16–36 (CLLCSLVKTIDQFEYDGCDNC) adopts a C4-type zinc-finger fold.

This sequence belongs to the SPT4 family. In terms of assembly, interacts with SUPT5H to form the DSIF complex. DSIF interacts with RNA polymerase II and with the positive transcription elongation factor b complex (P-TEFb complex), which is composed of CDK9 and cyclin-T.

Its subcellular location is the nucleus. Its function is as follows. May function as a component of the DRB sensitivity-inducing factor complex (DSIF complex), which regulates transcription elongation by RNA polymerase II. Probably enhances transcriptional pausing at sites proximal to the promoter, which may in turn facilitate the assembly of an elongation competent RNA polymerase II complex. The polypeptide is Transcription elongation factor SPT4 (supt4h1) (Xenopus laevis (African clawed frog)).